The following is a 409-amino-acid chain: 1-deoxy-D-xylulose 5-phosphate reductoisomerase (409 aa).

Residues Thr10, Gly11, Ser12, Ile13, Gly36, Arg37, Asn38, and Asn126 each coordinate NADPH. Position 127 (Lys127) interacts with 1-deoxy-D-xylulose 5-phosphate. Glu128 is a binding site for NADPH. Asp152 contacts Mn(2+). Residues Ser153, Glu154, Ser190, and His213 each contribute to the 1-deoxy-D-xylulose 5-phosphate site. Glu154 contributes to the Mn(2+) binding site. NADPH is bound at residue Gly219. Ser226, Asn231, Lys232, and Glu235 together coordinate 1-deoxy-D-xylulose 5-phosphate. Glu235 contacts Mn(2+).

It belongs to the DXR family. Requires Mg(2+) as cofactor. The cofactor is Mn(2+).

It carries out the reaction 2-C-methyl-D-erythritol 4-phosphate + NADP(+) = 1-deoxy-D-xylulose 5-phosphate + NADPH + H(+). It participates in isoprenoid biosynthesis; isopentenyl diphosphate biosynthesis via DXP pathway; isopentenyl diphosphate from 1-deoxy-D-xylulose 5-phosphate: step 1/6. In terms of biological role, catalyzes the NADPH-dependent rearrangement and reduction of 1-deoxy-D-xylulose-5-phosphate (DXP) to 2-C-methyl-D-erythritol 4-phosphate (MEP). This is 1-deoxy-D-xylulose 5-phosphate reductoisomerase from Prochlorococcus marinus (strain MIT 9515).